A 311-amino-acid polypeptide reads, in one-letter code: VQ motif-containing protein 9 (311 aa).

Positions 1-27 (MDKSCNSSGDSSAVSASATSSTGNNTT) are enriched in low complexity. The segment at 1 to 78 (MDKSCNSSGD…QINQGNLHQH (78 aa)) is disordered. The VQ motif lies at 90 to 99 (FRDVVQKLTG). 3 disordered regions span residues 103-125 (HERI…SSRL), 228-266 (QQEN…PPLF), and 290-311 (GQLG…YKGH). Pro residues predominate over residues 240-249 (FPPPHPPPPS). The segment covering 290 to 302 (GQLGFPVSPTTVP) has biased composition (low complexity).

In terms of assembly, interacts (via N-terminus) with WRKY8. Highly expressed in roots and at lower levels in rosette leaves, cauline leaves, stems, flowers and siliques.

It is found in the nucleus. Functionally, functions as a negative regulator of salt stress response. Functions as a repressor of WRKY8 transcription factor by decreasing the DNA-binding activity of WRKY8 and acts antagonistically with WRKY8 to regulate sodium and potassium homeostasis under salt stress. In Arabidopsis thaliana (Mouse-ear cress), this protein is VQ motif-containing protein 9.